A 453-amino-acid polypeptide reads, in one-letter code: Pentatricopeptide repeat-containing protein At2g38420, mitochondrial (453 aa).

Residues 1–77 (MARSSSWHRM…CEPTPQAYRF (77 aa)) constitute a mitochondrion transit peptide. 9 PPR repeats span residues 107-141 (PESIFRDVIAAYGFSGRIEEAIEVFFKIPNFRCVP), 142-177 (SAYTLNALLLVLVRKRQSLELVPEILVKACRMGVRL), 178-212 (EESTFGILIDALCRIGEVDCATELVRYMSQDSVIV), 213-249 (DPRLYSRLLSSVCKHKDSSCFDVIGYLEDLRKTRFSP), 250-284 (GLRDYTVVMRFLVEGGRGKEVVSVLNQMKCDRVEP), 285-319 (DLVCYTIVLQGVIADEDYPKADKLFDELLLLGLAP), 320-354 (DVYTYNVYINGLCKQNDIEGALKMMSSMNKLGSEP), 355-389 (NVVTYNILIKALVKAGDLSRAKTLWKEMETNGVNR), and 390-424 (NSHTFDIMISAYIEVDEVVCAHGLLEEAFNMNVFV).

This sequence belongs to the PPR family. P subfamily.

Its subcellular location is the mitochondrion. The protein is Pentatricopeptide repeat-containing protein At2g38420, mitochondrial of Arabidopsis thaliana (Mouse-ear cress).